A 577-amino-acid polypeptide reads, in one-letter code: Arginine--tRNA ligase (577 aa).

A 'HIGH' region motif is present at residues 122 to 132 (PNVAKEMHVGH).

It belongs to the class-I aminoacyl-tRNA synthetase family. As to quaternary structure, monomer.

Its subcellular location is the cytoplasm. The catalysed reaction is tRNA(Arg) + L-arginine + ATP = L-arginyl-tRNA(Arg) + AMP + diphosphate. This Haemophilus influenzae (strain PittEE) protein is Arginine--tRNA ligase.